The following is a 387-amino-acid chain: Phosphoglycerate kinase (387 aa).

Substrate contacts are provided by residues 21 to 23, R36, 59 to 62, R113, and R146; these read DLN and HLGR. ATP contacts are provided by residues K197, E314, and 340–343; that span reads GGDT.

It belongs to the phosphoglycerate kinase family. Monomer.

It is found in the cytoplasm. The catalysed reaction is (2R)-3-phosphoglycerate + ATP = (2R)-3-phospho-glyceroyl phosphate + ADP. The protein operates within carbohydrate degradation; glycolysis; pyruvate from D-glyceraldehyde 3-phosphate: step 2/5. In Photorhabdus luminescens (Xenorhabdus luminescens), this protein is Phosphoglycerate kinase.